A 96-amino-acid polypeptide reads, in one-letter code: Large ribosomal subunit protein eL21 (96 aa).

The interval M1–G66 is disordered.

This sequence belongs to the eukaryotic ribosomal protein eL21 family. As to quaternary structure, part of the 50S ribosomal subunit. Interacts with protein L18 and binds the 5S rRNA. Has been cross-linked to L18.

In terms of biological role, this is one of 5 proteins that mediate the attachment of the 5S rRNA onto the large ribosomal subunit, stabilizing the orientation of adjacent RNA domains. This Haloarcula marismortui (strain ATCC 43049 / DSM 3752 / JCM 8966 / VKM B-1809) (Halobacterium marismortui) protein is Large ribosomal subunit protein eL21 (rpl21e).